The primary structure comprises 572 residues: M-phase inducer phosphatase 3 (572 aa).

Disordered stretches follow at residues 95-117 and 304-354; these read NLGD…GKLE and SPSM…QRRG. The region spanning 420-527 is the Rhodanese domain; it reads LVEKFFIIDC…FFPEYKELCE (108 aa). Cysteine 476 is an active-site residue.

Belongs to the MPI phosphatase family.

It carries out the reaction O-phospho-L-tyrosyl-[protein] + H2O = L-tyrosyl-[protein] + phosphate. Functionally, this protein functions as a dosage-dependent inducer in mitotic control. It is a tyrosine protein phosphatase required for progression of the cell cycle. It may directly dephosphorylate p34(cdc2) and activate the p34(cdc2) kinase activity. This chain is M-phase inducer phosphatase 3 (cdc25-3), found in Xenopus laevis (African clawed frog).